Consider the following 434-residue polypeptide: Cyclic 2,3-diphosphoglycerate synthetase (434 aa).

The protein belongs to the cyclic 2,3-diphosphoglycerate synthetase family.

The protein localises to the cytoplasm. It carries out the reaction (2R)-2,3-bisphosphoglycerate + ATP + H(+) = cyclic (2R)-2,3-bisphosphoglycerate + ADP + phosphate. In terms of biological role, catalyzes the formation of cyclic 2,3-diphosphoglycerate (cDPG) by formation of an intramolecular phosphoanhydride bond at the expense of ATP. The chain is Cyclic 2,3-diphosphoglycerate synthetase from Thermococcus sibiricus (strain DSM 12597 / MM 739).